Consider the following 72-residue polypeptide: Bowman-Birk type proteinase inhibitor 2a (72 aa).

Intrachain disulfides connect cysteine 8–cysteine 61, cysteine 9–cysteine 24, cysteine 12–cysteine 57, cysteine 14–cysteine 22, cysteine 31–cysteine 38, cysteine 35–cysteine 50, and cysteine 40–cysteine 48.

Dimer.

In terms of biological role, inhibits trypsin (IC(50)=0.9 nM) and alpha-chymotrypsin (IC(50)=1.1 nM). This is Bowman-Birk type proteinase inhibitor 2a from Lathyrus sativus (White vetchling).